We begin with the raw amino-acid sequence, 913 residues long: Valine--tRNA ligase (913 aa).

The 'HIGH' region motif lies at 49–59 (PNVTGNLHLGH). The short motif at 544–548 (KMSKS) is the 'KMSKS' region element. ATP is bound at residue Lys-547. A coiled-coil region spans residues 851–912 (DWVKKQQKRL…ERLEGVLAQL (62 aa)).

The protein belongs to the class-I aminoacyl-tRNA synthetase family. ValS type 1 subfamily. In terms of assembly, monomer.

The protein resides in the cytoplasm. The catalysed reaction is tRNA(Val) + L-valine + ATP = L-valyl-tRNA(Val) + AMP + diphosphate. Functionally, catalyzes the attachment of valine to tRNA(Val). As ValRS can inadvertently accommodate and process structurally similar amino acids such as threonine, to avoid such errors, it has a 'posttransfer' editing activity that hydrolyzes mischarged Thr-tRNA(Val) in a tRNA-dependent manner. The polypeptide is Valine--tRNA ligase (Deinococcus radiodurans (strain ATCC 13939 / DSM 20539 / JCM 16871 / CCUG 27074 / LMG 4051 / NBRC 15346 / NCIMB 9279 / VKM B-1422 / R1)).